A 144-amino-acid polypeptide reads, in one-letter code: Histone H2B.2, sperm (144 aa).

A disordered region spans residues 1 to 51; that stretch reads MPRSPSKTSPRKGSPRRGSPSRKASPKRGGKGAKRAGKGGRRRNVVRRRRR. 5 short sequence motifs (SPKK motif) span residues 4–7, 9–12, 14–17, 19–22, and 25–28; these read SPSK, SPRK, SPRR, SPSR, and SPKR. 3 positions are modified to phosphoserine: Ser14, Ser19, and Ser25. Positions 24–51 are enriched in basic residues; the sequence is ASPKRGGKGAKRAGKGGRRRNVVRRRRR. A glycan (O-linked (GlcNAc) serine) is linked at Ser131. A Glycyl lysine isopeptide (Lys-Gly) (interchain with G-Cter in ubiquitin) cross-link involves residue Lys139.

It belongs to the histone H2B family. As to quaternary structure, the nucleosome is a histone octamer containing two molecules each of H2A, H2B, H3 and H4 assembled in one H3-H4 heterotetramer and two H2A-H2B heterodimers. The octamer wraps approximately 147 bp of DNA. In terms of processing, monoubiquitination of Lys-139 gives a specific tag for epigenetic transcriptional activation and is also prerequisite for histone H3 'Lys-4' and 'Lys-79' methylation. Post-translationally, phosphorylated on SPKK motifs 3, 4 and 5; which may regulate DNA binding. Dephosphorylated during maturation of spermatids to mature sperm and rephosphorylated at fertilization. GlcNAcylation at Ser-131 promotes monoubiquitination of Lys-139. It fluctuates in response to extracellular glucose, and associates with transcribed genes.

The protein localises to the nucleus. Its subcellular location is the chromosome. In terms of biological role, core component of nucleosome. Nucleosomes wrap and compact DNA into chromatin, limiting DNA accessibility to the cellular machineries which require DNA as a template. Histones thereby play a central role in transcription regulation, DNA repair, DNA replication and chromosomal stability. DNA accessibility is regulated via a complex set of post-translational modifications of histones, also called histone code, and nucleosome remodeling. The polypeptide is Histone H2B.2, sperm (Strongylocentrotus purpuratus (Purple sea urchin)).